The sequence spans 332 residues: Biotin synthase (332 aa).

Residues 53-283 (WGKGGIHACS…VHPHSIIKFA (231 aa)) form the Radical SAM core domain. Residues Cys-71, Cys-75, and Cys-78 each contribute to the [4Fe-4S] cluster site. [2Fe-2S] cluster contacts are provided by Cys-150, Cys-211, and Lys-281.

Belongs to the radical SAM superfamily. Biotin synthase family. As to quaternary structure, homodimer. The cofactor is [4Fe-4S] cluster. [2Fe-2S] cluster serves as cofactor.

The enzyme catalyses (4R,5S)-dethiobiotin + (sulfur carrier)-SH + 2 reduced [2Fe-2S]-[ferredoxin] + 2 S-adenosyl-L-methionine = (sulfur carrier)-H + biotin + 2 5'-deoxyadenosine + 2 L-methionine + 2 oxidized [2Fe-2S]-[ferredoxin]. It participates in cofactor biosynthesis; biotin biosynthesis; biotin from 7,8-diaminononanoate: step 2/2. In terms of biological role, catalyzes the conversion of dethiobiotin (DTB) to biotin by the insertion of a sulfur atom into dethiobiotin via a radical-based mechanism. The polypeptide is Biotin synthase (Chlorobium phaeovibrioides (strain DSM 265 / 1930) (Prosthecochloris vibrioformis (strain DSM 265))).